The following is a 454-amino-acid chain: F-box/WD-40 repeat-containing protein At3g52030 (454 aa).

Residues 20–66 (PTSIESLDADILCIIFSFLDLFDLVHCTVVCNSWNAVIKRLKLLQAS) enclose the F-box domain. 8 WD repeats span residues 85-116 (DRPA…RWEA), 117-153 (HSHR…CMEE), 170-214 (SKKL…SIFP), 215-255 (SRAG…CSQI), 258-296 (TQGG…PVAT), 301-340 (ITAG…RLWE), 343-383 (VSPN…VLSR), and 422-454 (KVRP…FNLS).

The polypeptide is F-box/WD-40 repeat-containing protein At3g52030 (Arabidopsis thaliana (Mouse-ear cress)).